The sequence spans 439 residues: Ribosomal protein uS12 methylthiotransferase RimO (439 aa).

In terms of domain architecture, MTTase N-terminal spans 3–118; it reads KKFYITTLGC…AGKILREKFP (116 aa). The [4Fe-4S] cluster site is built by Cys12, Cys48, Cys81, Cys157, Cys161, and Cys164. The Radical SAM core domain maps to 143–370; sequence NYSKPYAYVK…RDVHLAILEE (228 aa). A TRAM domain is found at 373-438; that stretch reads ESRIGQTYDA…EYDMNGTWIS (66 aa).

Belongs to the methylthiotransferase family. RimO subfamily. Requires [4Fe-4S] cluster as cofactor.

It localises to the cytoplasm. It catalyses the reaction L-aspartate(89)-[ribosomal protein uS12]-hydrogen + (sulfur carrier)-SH + AH2 + 2 S-adenosyl-L-methionine = 3-methylsulfanyl-L-aspartate(89)-[ribosomal protein uS12]-hydrogen + (sulfur carrier)-H + 5'-deoxyadenosine + L-methionine + A + S-adenosyl-L-homocysteine + 2 H(+). Its function is as follows. Catalyzes the methylthiolation of an aspartic acid residue of ribosomal protein uS12. The protein is Ribosomal protein uS12 methylthiotransferase RimO of Leptospira borgpetersenii serovar Hardjo-bovis (strain JB197).